A 318-amino-acid chain; its full sequence is Methionyl-tRNA formyltransferase (318 aa).

Residue 112–115 (SILP) coordinates (6S)-5,6,7,8-tetrahydrofolate.

Belongs to the Fmt family.

The enzyme catalyses L-methionyl-tRNA(fMet) + (6R)-10-formyltetrahydrofolate = N-formyl-L-methionyl-tRNA(fMet) + (6S)-5,6,7,8-tetrahydrofolate + H(+). Functionally, attaches a formyl group to the free amino group of methionyl-tRNA(fMet). The formyl group appears to play a dual role in the initiator identity of N-formylmethionyl-tRNA by promoting its recognition by IF2 and preventing the misappropriation of this tRNA by the elongation apparatus. This chain is Methionyl-tRNA formyltransferase, found in Haemophilus influenzae (strain PittEE).